The sequence spans 503 residues: Cobyric acid synthase (503 aa).

The GATase cobBQ-type domain occupies 245 to 447; the sequence is DISIAIIRLP…LHGIFDEISL (203 aa). Catalysis depends on C326, which acts as the Nucleophile. Residue H439 is part of the active site.

This sequence belongs to the CobB/CobQ family. CobQ subfamily.

It functions in the pathway cofactor biosynthesis; adenosylcobalamin biosynthesis. Its function is as follows. Catalyzes amidations at positions B, D, E, and G on adenosylcobyrinic A,C-diamide. NH(2) groups are provided by glutamine, and one molecule of ATP is hydrogenolyzed for each amidation. The protein is Cobyric acid synthase of Alkaliphilus metalliredigens (strain QYMF).